The chain runs to 905 residues: Protein translocase subunit SecA (905 aa).

Residues Gln-87, 105–109 (GEGKT), and Asp-512 each bind ATP. The segment at 565 to 584 (RRIDNQLRGRSGRQGDPGSS) is disordered. Positions 886, 888, 897, and 898 each coordinate Zn(2+).

The protein belongs to the SecA family. In terms of assembly, monomer and homodimer. Part of the essential Sec protein translocation apparatus which comprises SecA, SecYEG and auxiliary proteins SecDF-YajC and YidC. Requires Zn(2+) as cofactor.

The protein resides in the cell inner membrane. It is found in the cytoplasm. It catalyses the reaction ATP + H2O + cellular proteinSide 1 = ADP + phosphate + cellular proteinSide 2.. Its function is as follows. Part of the Sec protein translocase complex. Interacts with the SecYEG preprotein conducting channel. Has a central role in coupling the hydrolysis of ATP to the transfer of proteins into and across the cell membrane, serving both as a receptor for the preprotein-SecB complex and as an ATP-driven molecular motor driving the stepwise translocation of polypeptide chains across the membrane. The chain is Protein translocase subunit SecA from Haemophilus ducreyi (strain 35000HP / ATCC 700724).